The primary structure comprises 384 residues: MPDTSAFSATTRPYFATVARGLEAIAAQELTELGAEQVKPEFAGVAFIGDRALLYRINLWSRLIYRVLMPMATVKAFNAQDLYRSIKKIDWDEYFSPEQTLQINCTGKNPQLNHSHFTALQVKNAIVDQQRDRYQRRSSVDLEQPDIVINAHIHQNHCQLSLDSTGFSLHRRGYRPALGNAPLKETLASALLTMAGWTPELPLYDPLCGSGTFLLEAGLQSLNIAPGKFQPGFCFQQWPDFDQDLWHSLLQTAKAGERDTLQAPLWGSDGDREVIQAAKSNAQQCQLGGKIHWQKLNFADIEPPAAEGVLICNPPYGKRIGQEEALGDFYQQIGDVLKQRFRGWTAFVFSGNKALTKRIGLRTSARFPVNNGGLPCTLLKYELY.

The region spanning 53–164 is the THUMP domain; that stretch reads LLYRINLWSR…QNHCQLSLDS (112 aa).

The protein belongs to the methyltransferase superfamily.

The polypeptide is Putative RNA methyltransferase slr0064 (Synechocystis sp. (strain ATCC 27184 / PCC 6803 / Kazusa)).